A 709-amino-acid chain; its full sequence is Polyribonucleotide nucleotidyltransferase (709 aa).

D491 and D497 together coordinate Mg(2+). The region spanning P557–I617 is the KH domain. Residues G641–E709 enclose the S1 motif domain.

This sequence belongs to the polyribonucleotide nucleotidyltransferase family. Mg(2+) is required as a cofactor.

The protein localises to the cytoplasm. It carries out the reaction RNA(n+1) + phosphate = RNA(n) + a ribonucleoside 5'-diphosphate. Involved in mRNA degradation. Catalyzes the phosphorolysis of single-stranded polyribonucleotides processively in the 3'- to 5'-direction. This is Polyribonucleotide nucleotidyltransferase from Helicobacter hepaticus (strain ATCC 51449 / 3B1).